We begin with the raw amino-acid sequence, 240 residues long: Ribosomal RNA small subunit methyltransferase J (240 aa).

Residues 93-94 (RD) and Asp162 contribute to the S-adenosyl-L-methionine site.

This sequence belongs to the methyltransferase superfamily. RsmJ family.

Its subcellular location is the cytoplasm. The catalysed reaction is guanosine(1516) in 16S rRNA + S-adenosyl-L-methionine = N(2)-methylguanosine(1516) in 16S rRNA + S-adenosyl-L-homocysteine + H(+). In terms of biological role, specifically methylates the guanosine in position 1516 of 16S rRNA. This Francisella philomiragia subsp. philomiragia (strain ATCC 25017 / CCUG 19701 / FSC 153 / O#319-036) protein is Ribosomal RNA small subunit methyltransferase J.